The chain runs to 316 residues: Methionyl-tRNA formyltransferase (316 aa).

Residue 111–114 (SLLP) participates in (6S)-5,6,7,8-tetrahydrofolate binding.

The protein belongs to the Fmt family.

It carries out the reaction L-methionyl-tRNA(fMet) + (6R)-10-formyltetrahydrofolate = N-formyl-L-methionyl-tRNA(fMet) + (6S)-5,6,7,8-tetrahydrofolate + H(+). Its function is as follows. Attaches a formyl group to the free amino group of methionyl-tRNA(fMet). The formyl group appears to play a dual role in the initiator identity of N-formylmethionyl-tRNA by promoting its recognition by IF2 and preventing the misappropriation of this tRNA by the elongation apparatus. The polypeptide is Methionyl-tRNA formyltransferase (Limosilactobacillus fermentum (strain NBRC 3956 / LMG 18251) (Lactobacillus fermentum)).